The chain runs to 231 residues: Cytochrome c oxidase subunit 2 (231 aa).

Over 1–14 (MAHPAQLGLQNATS) the chain is Mitochondrial intermembrane. The helical transmembrane segment at 15 to 45 (PIMEELIAFHDHALMIIFLISSLVLYIISLM) threads the bilayer. Topologically, residues 46 to 59 (LTTKLTHTSTMNAQ) are mitochondrial matrix. A helical transmembrane segment spans residues 60-87 (EIEMVWTILPAIILIMIALPSLRILYMT). The Mitochondrial intermembrane segment spans residues 88 to 231 (DEFNKPYLTL…WASYLYIVSL (144 aa)). H161, C196, E198, C200, H204, and M207 together coordinate Cu cation. E198 contributes to the Mg(2+) binding site.

The protein belongs to the cytochrome c oxidase subunit 2 family. As to quaternary structure, component of the cytochrome c oxidase (complex IV, CIV), a multisubunit enzyme composed of 14 subunits. The complex is composed of a catalytic core of 3 subunits MT-CO1, MT-CO2 and MT-CO3, encoded in the mitochondrial DNA, and 11 supernumerary subunits COX4I, COX5A, COX5B, COX6A, COX6B, COX6C, COX7A, COX7B, COX7C, COX8 and NDUFA4, which are encoded in the nuclear genome. The complex exists as a monomer or a dimer and forms supercomplexes (SCs) in the inner mitochondrial membrane with NADH-ubiquinone oxidoreductase (complex I, CI) and ubiquinol-cytochrome c oxidoreductase (cytochrome b-c1 complex, complex III, CIII), resulting in different assemblies (supercomplex SCI(1)III(2)IV(1) and megacomplex MCI(2)III(2)IV(2)). Found in a complex with TMEM177, COA6, COX18, COX20, SCO1 and SCO2. Interacts with TMEM177 in a COX20-dependent manner. Interacts with COX20. Interacts with COX16. The cofactor is Cu cation.

It localises to the mitochondrion inner membrane. The enzyme catalyses 4 Fe(II)-[cytochrome c] + O2 + 8 H(+)(in) = 4 Fe(III)-[cytochrome c] + 2 H2O + 4 H(+)(out). Component of the cytochrome c oxidase, the last enzyme in the mitochondrial electron transport chain which drives oxidative phosphorylation. The respiratory chain contains 3 multisubunit complexes succinate dehydrogenase (complex II, CII), ubiquinol-cytochrome c oxidoreductase (cytochrome b-c1 complex, complex III, CIII) and cytochrome c oxidase (complex IV, CIV), that cooperate to transfer electrons derived from NADH and succinate to molecular oxygen, creating an electrochemical gradient over the inner membrane that drives transmembrane transport and the ATP synthase. Cytochrome c oxidase is the component of the respiratory chain that catalyzes the reduction of oxygen to water. Electrons originating from reduced cytochrome c in the intermembrane space (IMS) are transferred via the dinuclear copper A center (CU(A)) of subunit 2 and heme A of subunit 1 to the active site in subunit 1, a binuclear center (BNC) formed by heme A3 and copper B (CU(B)). The BNC reduces molecular oxygen to 2 water molecules using 4 electrons from cytochrome c in the IMS and 4 protons from the mitochondrial matrix. The polypeptide is Cytochrome c oxidase subunit 2 (MT-CO2) (Lagothrix lagotricha (Brown woolly monkey)).